The sequence spans 609 residues: Zinc metalloproteinase-disintegrin-like (609 aa).

The N-terminal stretch at 1-20 is a signal peptide; sequence MIQVLLVTICLAALPYQGSS. Residues 21–189 constitute a propeptide that is removed on maturation; that stretch reads IILESGNVND…KKASQLVVTA (169 aa). Residues 198–393 form the Peptidase M12B domain; it reads RFVELVLVVD…QNPECIVNEP (196 aa). Ca(2+) is bound by residues Glu-201 and Asp-285. Disulfide bonds link Cys-308–Cys-388, Cys-348–Cys-372, and Cys-350–Cys-355. Position 333 (His-333) interacts with Zn(2+). Glu-334 is an active-site residue. The Zn(2+) site is built by His-337 and His-343. Asn-371 carries an N-linked (GlcNAc...) asparagine glycan. Cys-388, Asn-391, Val-403, Asn-406, Leu-408, Glu-410, Glu-413, and Asp-416 together coordinate Ca(2+). In terms of domain architecture, Disintegrin spans 401-487; the sequence is PPVCGNELLE…ECPADVFHKN (87 aa). Intrachain disulfides connect Cys-404–Cys-433, Cys-415–Cys-428, Cys-417–Cys-423, Cys-427–Cys-450, Cys-441–Cys-447, Cys-446–Cys-472, Cys-459–Cys-479, Cys-466–Cys-498, Cys-491–Cys-503, Cys-510–Cys-560, Cys-525–Cys-571, Cys-538–Cys-548, Cys-555–Cys-597, and Cys-591–Cys-602. A D/ECD-tripeptide motif is present at residues 465–467; sequence ECD. Positions 467, 468, 470, 482, and 483 each coordinate Ca(2+).

It belongs to the venom metalloproteinase (M12B) family. P-III subfamily. P-IIIa sub-subfamily. As to quaternary structure, monomer. Zn(2+) serves as cofactor. In terms of tissue distribution, expressed by the venom gland.

The protein localises to the secreted. Its function is as follows. This protein is a zinc metalloprotease from snake venom that possesses hemorrhagic activity. This chain is Zinc metalloproteinase-disintegrin-like, found in Crotalus durissus durissus (Central American rattlesnake).